The primary structure comprises 330 residues: Phosphate acyltransferase (330 aa).

The protein belongs to the PlsX family. In terms of assembly, homodimer. Probably interacts with PlsY.

Its subcellular location is the cytoplasm. It carries out the reaction a fatty acyl-[ACP] + phosphate = an acyl phosphate + holo-[ACP]. It functions in the pathway lipid metabolism; phospholipid metabolism. Catalyzes the reversible formation of acyl-phosphate (acyl-PO(4)) from acyl-[acyl-carrier-protein] (acyl-ACP). This enzyme utilizes acyl-ACP as fatty acyl donor, but not acyl-CoA. The sequence is that of Phosphate acyltransferase from Teredinibacter turnerae (strain ATCC 39867 / T7901).